The sequence spans 274 residues: Diaminopimelate epimerase (274 aa).

Asn11 and Asn62 together coordinate substrate. Cys71 serves as the catalytic Proton donor. Residues 72-73 (GN), Asn157, Asn190, and 208-209 (ER) each bind substrate. The active-site Proton acceptor is Cys217. Substrate is bound at residue 218–219 (GT).

The protein belongs to the diaminopimelate epimerase family. As to quaternary structure, homodimer.

Its subcellular location is the cytoplasm. It carries out the reaction (2S,6S)-2,6-diaminopimelate = meso-2,6-diaminopimelate. Its pathway is amino-acid biosynthesis; L-lysine biosynthesis via DAP pathway; DL-2,6-diaminopimelate from LL-2,6-diaminopimelate: step 1/1. Catalyzes the stereoinversion of LL-2,6-diaminopimelate (L,L-DAP) to meso-diaminopimelate (meso-DAP), a precursor of L-lysine and an essential component of the bacterial peptidoglycan. The chain is Diaminopimelate epimerase from Elusimicrobium minutum (strain Pei191).